A 290-amino-acid chain; its full sequence is Cilia- and flagella-associated protein 298 (290 aa).

Tyr-264 bears the Phosphotyrosine mark.

It belongs to the CFAP298 family. As to quaternary structure, interacts with ZMYND10.

Its subcellular location is the cytoplasm. It is found in the cytoskeleton. The protein localises to the cilium basal body. Functionally, plays a role in motile cilium function, possibly by acting on outer dynein arm assembly. Seems to be important for initiation rather than maintenance of cilium motility. Required for correct positioning of the cilium at the apical cell surface, suggesting an additional role in the planar cell polarity (PCP) pathway. May suppress canonical Wnt signaling activity. In Homo sapiens (Human), this protein is Cilia- and flagella-associated protein 298.